We begin with the raw amino-acid sequence, 267 residues long: Corrinoid adenosyltransferase EutT (267 aa).

Residues Cys-80 and Cys-83 each coordinate a divalent metal cation.

Belongs to the Cob(I)alamin adenosyltransferase family. EutT subfamily. Homodimer. Requires a divalent metal cation as cofactor.

The protein localises to the bacterial microcompartment. The catalysed reaction is 2 cob(II)alamin + reduced [electron-transfer flavoprotein] + 2 ATP + 2 H2O = 2 adenosylcob(III)alamin + oxidized [electron-transfer flavoprotein] + 2 phosphate + 2 diphosphate + 3 H(+). It catalyses the reaction 2 cob(II)inamide + reduced [electron-transfer flavoprotein] + 2 ATP + 2 H2O = 2 adenosylcob(III)inamide + oxidized [electron-transfer flavoprotein] + 2 phosphate + 2 diphosphate + 3 H(+). The protein operates within amine and polyamine degradation; ethanolamine degradation. Its function is as follows. Converts cyanocobalamin (CN-B12) to adenosylcobalamin (AdoCbl), the inducer of the eut operon. Is not active on cobinamide nor other intermediates in the adenosylcobalamin synthetic pathway. Allows full induction of the eut operon. The polypeptide is Corrinoid adenosyltransferase EutT (eutT) (Escherichia coli O6:H1 (strain CFT073 / ATCC 700928 / UPEC)).